Here is a 214-residue protein sequence, read N- to C-terminus: Melanoregulin (214 aa).

A Cholesterol-binding sequence motif motif is present at residues 162 to 172 (LSERYLFVVDR). Phosphoserine is present on S213.

Belongs to the melanoregulin family. Identified in a complex with RILP and DCTN1; interacts directly with RILP, but does not interact directly with DCTN1. Interacts with PRPH2. Post-translationally, palmitoylated. Palmitoylation is required to maintain the protein at the melanosome membrane. In terms of tissue distribution, expressed in photoreceptor cells (at protein level).

It localises to the apical cell membrane. The protein localises to the melanosome membrane. The protein resides in the lysosome membrane. It is found in the cytoplasmic vesicle membrane. In terms of biological role, probably functions as a cargo-recognition protein that couples cytoplasmic vesicles to the transport machinery. Plays a role in hair pigmentation, a process that involves shedding of melanosome-containing vesicles from melanocytes, followed by phagocytosis of the melanosome-containing vesicles by keratinocytes. Functions on melanosomes as receptor for RILP and the complex formed by RILP and DCTN1, and thereby contributes to retrograde melanosome transport from the cell periphery to the center. Overexpression causes accumulation of late endosomes and/or lysosomes at the microtubule organising center (MTOC) at the center of the cell. Probably binds cholesterol and requires the presence of cholesterol in membranes to function in microtubule-mediated retrograde organelle transport. Binds phosphatidylinositol 3-phosphate, phosphatidylinositol 4-phosphate, phosphatidylinositol 5-phosphate and phosphatidylinositol 3,5-bisphosphate, but not phosphatidylinositol 3,4-bisphosphate or phosphatidylinositol 4,5-bisphosphate. Required for normal phagosome clearing and normal activation of lysosomal enzymes in lysosomes from retinal pigment epithelium cells. Required for normal degradation of the lipofuscin component N-retinylidene-N-retinylethanolamine (A2E) in the eye. May function in membrane fusion and regulate the biogenesis of disk membranes of photoreceptor rod cells. This is Melanoregulin (MREG) from Homo sapiens (Human).